Consider the following 95-residue polypeptide: Co-chaperonin GroES (95 aa).

Belongs to the GroES chaperonin family. In terms of assembly, heptamer of 7 subunits arranged in a ring. Interacts with the chaperonin GroEL.

The protein localises to the cytoplasm. Its function is as follows. Together with the chaperonin GroEL, plays an essential role in assisting protein folding. The GroEL-GroES system forms a nano-cage that allows encapsulation of the non-native substrate proteins and provides a physical environment optimized to promote and accelerate protein folding. GroES binds to the apical surface of the GroEL ring, thereby capping the opening of the GroEL channel. This chain is Co-chaperonin GroES, found in Alkalilimnicola ehrlichii (strain ATCC BAA-1101 / DSM 17681 / MLHE-1).